Reading from the N-terminus, the 69-residue chain is DNA gyrase inhibitor YacG (69 aa).

4 residues coordinate Zn(2+): C14, C17, C33, and C37.

Belongs to the DNA gyrase inhibitor YacG family. As to quaternary structure, interacts with GyrB. Zn(2+) is required as a cofactor.

Its function is as follows. Inhibits all the catalytic activities of DNA gyrase by preventing its interaction with DNA. Acts by binding directly to the C-terminal domain of GyrB, which probably disrupts DNA binding by the gyrase. The sequence is that of DNA gyrase inhibitor YacG from Aliivibrio salmonicida (strain LFI1238) (Vibrio salmonicida (strain LFI1238)).